The sequence spans 465 residues: MQVFNTLGKRLQSFEPHEPNTVKMYVCGPTVYDEVHIGHGRTFVAFDAMSRYLRVKGYNVVRVQNITDIDDKIINKARELGKSWNEVSEYYSKSYLEHIGALKVKIDMHPKVTTHIKEIIDFVQRLIDSGHAYVANGSVYFDVDTYPGYGELSNVKKEEWDQGEEIVKEKRHPYDFALWKAYKPGEPYWESPWGKGRPGWHIECSTMSTRYLGTKIDIHGGGMDLVFPHHENERAQTESLTGSTWVKYWMHVAFLTIRKEKMSKSKGNIVPLKEALSKYGPSTLRYWFLSSQYRNPIEYSEEILEQSSRSLQRLKDAISVLRKIIQKGPAHYAKEEDVKVQEEIVRAISRFDEHMENDFDTSNALTSIHEIASIVFSKLQYSEDVFGALIALDGFRKFNEVFAVMDEEFSAELDRLTKVIDAVIEVRNYLRKKQMYDLSDQIRDILSRSGVKILDSKEGSTWRFQ.

C27 serves as a coordination point for Zn(2+). Positions P29–H39 match the 'HIGH' region motif. Residues C204, H229, and E233 each contribute to the Zn(2+) site. A 'KMSKS' region motif is present at residues K261–S265. Residue K264 participates in ATP binding.

It belongs to the class-I aminoacyl-tRNA synthetase family. Zn(2+) serves as cofactor.

It localises to the cytoplasm. It catalyses the reaction tRNA(Cys) + L-cysteine + ATP = L-cysteinyl-tRNA(Cys) + AMP + diphosphate. This chain is Cysteine--tRNA ligase, found in Metallosphaera sedula (strain ATCC 51363 / DSM 5348 / JCM 9185 / NBRC 15509 / TH2).